The chain runs to 347 residues: NADH-ubiquinone oxidoreductase chain 2 (347 aa).

The next 10 membrane-spanning stretches (helical) occupy residues 13–33 (IFTGTLITALSSHWFFTWVGL), 60–80 (FLTQATASMILLMAILSNSML), 96–116 (LMIMMAMAMKLGMAPFHFWVP), 123–143 (PLMSGLLLLTWQKLAPISIMY), 149–169 (LNVNLLLTLSILSIMAGSWGG), 178–198 (ILAYSSITHMGWMMAVLPYNP), 201–221 (TILNLTIYIILTTTAFLLLNL), 247–267 (TLLSLGGLPPLTGFLPKWVII), 274–294 (NSLIIPTIMAIITLLNLYFYL), and 326–346 (LPTLITLTTLLLPISPFMLMI).

The protein belongs to the complex I subunit 2 family. In terms of assembly, core subunit of respiratory chain NADH dehydrogenase (Complex I) which is composed of 45 different subunits. Interacts with TMEM242.

It localises to the mitochondrion inner membrane. It carries out the reaction a ubiquinone + NADH + 5 H(+)(in) = a ubiquinol + NAD(+) + 4 H(+)(out). Core subunit of the mitochondrial membrane respiratory chain NADH dehydrogenase (Complex I) which catalyzes electron transfer from NADH through the respiratory chain, using ubiquinone as an electron acceptor. Essential for the catalytic activity and assembly of complex I. The polypeptide is NADH-ubiquinone oxidoreductase chain 2 (Pan troglodytes (Chimpanzee)).